We begin with the raw amino-acid sequence, 432 residues long: G-protein coupled receptor 22 (432 aa).

At 1 to 45 (MCFSPVLEINMQSESNVTVRDDIEDIDTNMYQPLSYPLSFQVSLT) the chain is on the cytoplasmic side. A helical membrane pass occupies residues 46–66 (GFLMLEIVLGLGSNLTVLVLY). The Extracellular portion of the chain corresponds to 67-85 (CMKSNLISSVSNIITMNLH). A helical transmembrane segment spans residues 86–106 (VLDVIICVGCIPLTIVILLLS). Over 107–115 (LERNTALIC) the chain is Cytoplasmic. A helical membrane pass occupies residues 116–136 (CFHEACVSFASVSTAINVFAI). The Extracellular portion of the chain corresponds to 137 to 156 (TLDRYDISVKPANRILTMGR). Residues 157 to 177 (AVMLMTSIWIFSFFSFLIPFI) traverse the membrane as a helical segment. The Cytoplasmic segment spans residues 178–208 (EVNFFSLQSGNAWENKTLLCVSTSEYYTELG). Residues 209 to 229 (MYYHLLVQIPIFFFTVIVMLI) form a helical membrane-spanning segment. Residues 230–314 (TYTKILQALN…ERQKRVFKMS (85 aa)) are Extracellular-facing. A helical membrane pass occupies residues 315-335 (LLIISTFLLCWTPISVLNTTI). Topologically, residues 336–348 (LCLGPSDLLVKLR) are cytoplasmic. A helical transmembrane segment spans residues 349–369 (LCFLVMAYGTTIFHPLLYAFT). At 370–432 (RQKFQKVLKS…KCLVPQVVTD (63 aa)) the chain is on the extracellular side.

The protein belongs to the G-protein coupled receptor 1 family. As to expression, abundant levels detected in the brain. High expression in the heart (at protein level). No detectable expression in other peripheral tissues.

It is found in the cell membrane. Its function is as follows. Orphan G-protein coupled receptor. Seems to act through a G(i)/G(o) mediated pathway. May be involved in ciliogenesis. The chain is G-protein coupled receptor 22 from Rattus norvegicus (Rat).